Reading from the N-terminus, the 557-residue chain is MALQVMFGLEFFLVLEALLFLFTCYQVVKAGRILDEIQDKLSEVKRGERVGTKRKYGTQNKYTGLSKGLEPEEKLRLGRNTWREIRRKRGKREKKKDQLAEVSRKRSLCSSLDGLGKPALSSSEAGEESSSEETDWEEEAAHYQPANWSRKKPKAAGEGQFADWPQGSRLQGPPYAESPPCVVRQQCAERCAERQCAERQCADSFIPREEQRKIQQAFPVFEGAEGGRVHAPVEYLQIKEIAESVRKYGTNANFTLVQLDRLAGMALTPADWQTVVKAALPSMGKYMEWRALWHEAAQAQARANAAALTPEQRDWTFDLLTGQGAYSADQTNYHWGAYAQISSTAIRPGRRSRAGETTGQLTKIIQGPQESFSDFVARMTEAAERIFGESEQAAPLIEQLIYEQATKECRAVHSPKKEQRLTRLAQGLSRAWGKPRLLKTDNGPAYTSQKFQQFCRQMDVTHLTGLPYNPQGQGIVERAHRTLKAYLIKQKRGTFEETVPRAPRVSVSLALFTLNFLNIDAHGHTAAERHVQSQIGPMRWLNGKMSLIINGMARILS.

A disordered region spans residues 113 to 172; that stretch reads DGLGKPALSSSEAGEESSSEETDWEEEAAHYQPANWSRKKPKAAGEGQFADWPQGSRLQG. Residues 125 to 138 show a composition bias toward acidic residues; it reads AGEESSSEETDWEE. The 191-residue stretch at 344-534 folds into the Integrase catalytic domain; it reads TAIRPGRRSR…TAAERHVQSQ (191 aa).

The sequence is that of IgE-binding protein (Iap) from Mus musculus (Mouse).